A 203-amino-acid polypeptide reads, in one-letter code: Ras-related protein Rab-13 (203 aa).

GTP is bound by residues S17, G18, G20, K21, T22, C23, and T40. T22 is a Mg(2+) binding site. Positions 31 to 45 (DNFNNTYISTIGIDF) match the Switch 1 motif. T40 contacts Mg(2+). Glycyl lysine isopeptide (Lys-Gly) (interchain with G-Cter in ubiquitin) cross-links involve residues K46 and K58. D63 contributes to the Mg(2+) binding site. The short motif at 63–80 (DTAGQERFKTITTAYYRG) is the Switch 2 element. Residues G66, N121, K122, D124, A152, and K153 each coordinate GTP. The segment at 173–203 (SGGRRSGNHSKPSSTDLKPSDKKNTNKCSLG) is disordered. S178 is modified (phosphoserine). The residue at position 200 (C200) is a Cysteine methyl ester. C200 carries the S-geranylgeranyl cysteine lipid modification. Residues 201–203 (SLG) constitute a propeptide, removed in mature form.

The protein belongs to the small GTPase superfamily. Rab family. Interacts (GTP-bound form) with MICALL2; competes with RAB8A and is involved in tight junctions assembly. Interacts (GTP-bound form) with MICALL1. Interacts (GTP-bound form) with MICAL1, MICAL3, MICALCL, EHBP1 and EHBP1L1; ternary complexes of RAB8A, RAB13 and either MICAL1 or EHBP1L1 are possible. Interacts with PRKACA; downstream effector of RAB13 involved in tight junction assembly. Interacts with GRB2; may recruit RAB13 to the leading edge of migrating endothelial cells where it can activate RHOA. Interacts (isoprenylated form) with PDE6D; dissociates RAB13 from membranes. Interacts with BICDL2/BICDR2. Interacts with LEPROT and LEPROTL1. Requires Mg(2+) as cofactor. In terms of processing, ubiquitinated via 'Lys-11'-linked ubiquitination on Lys-46 and Lys-58; impairing the recruitment of guanosine diphosphate (GDP) dissociation inhibitor 1/GDI1.

Its subcellular location is the cell membrane. It is found in the cytoplasmic vesicle membrane. The protein resides in the cell junction. It localises to the tight junction. The protein localises to the golgi apparatus. Its subcellular location is the trans-Golgi network membrane. It is found in the recycling endosome membrane. The protein resides in the cell projection. It localises to the lamellipodium. The enzyme catalyses GTP + H2O = GDP + phosphate + H(+). Its activity is regulated as follows. Regulated by guanine nucleotide exchange factors (GEFs) including DENND1C, which promote the exchange of bound GDP for free GTP. Regulated by GTPase activating proteins (GAPs) which increase the GTP hydrolysis activity. Inhibited by GDP dissociation inhibitors (GDIs). Activated in response to insulin. Its function is as follows. The small GTPases Rab are key regulators of intracellular membrane trafficking, from the formation of transport vesicles to their fusion with membranes. Rabs cycle between an inactive GDP-bound form and an active GTP-bound form that is able to recruit to membranes different sets of downstream effectors directly responsible for vesicle formation, movement, tethering and fusion. RAB13 is involved in endocytic recycling and regulates the transport to the plasma membrane of transmembrane proteins like the tight junction protein OCLN/occludin. Thereby, it regulates the assembly and the activity of tight junctions. Moreover, it may also regulate tight junction assembly by activating the PKA signaling pathway and by reorganizing the actin cytoskeleton through the activation of the downstream effectors PRKACA and MICALL2 respectively. Through its role in tight junction assembly, may play a role in the establishment of Sertoli cell barrier. Plays also a role in angiogenesis through regulation of endothelial cells chemotaxis. Also involved in neurite outgrowth. Has also been proposed to play a role in post-Golgi membrane trafficking from the TGN to the recycling endosome. Finally, it has been involved in insulin-induced transport to the plasma membrane of the glucose transporter GLUT4 and therefore may play a role in glucose homeostasis. This is Ras-related protein Rab-13 (RAB13) from Mesocricetus auratus (Golden hamster).